The chain runs to 93 residues: Toxin RelE1 (93 aa).

Belongs to the RelE toxin family.

Functionally, toxic component of a type II toxin-antitoxin (TA) system. Its toxic effect is neutralized by coexpression with cognate antitoxin RelB1 but no other ParD or RelB antitoxin. The polypeptide is Toxin RelE1 (relE1) (Caulobacter vibrioides (strain ATCC 19089 / CIP 103742 / CB 15) (Caulobacter crescentus)).